The chain runs to 131 residues: Putative gamma-taxilin 2 (131 aa).

This sequence belongs to the taxilin family. Ubiquitously expressed.

This Homo sapiens (Human) protein is Putative gamma-taxilin 2 (TXLNGY).